Consider the following 74-residue polypeptide: MARAFFRRRKSCPFSAKDAPRIDYKDVRLLQGFVSERGKIVPSRITAVSAKKQRELAQAIKRARHIGLLPYIVK.

The protein belongs to the bacterial ribosomal protein bS18 family. In terms of assembly, part of the 30S ribosomal subunit. Forms a tight heterodimer with protein bS6.

Binds as a heterodimer with protein bS6 to the central domain of the 16S rRNA, where it helps stabilize the platform of the 30S subunit. The polypeptide is Small ribosomal subunit protein bS18 (Rhizorhabdus wittichii (strain DSM 6014 / CCUG 31198 / JCM 15750 / NBRC 105917 / EY 4224 / RW1) (Sphingomonas wittichii)).